The primary structure comprises 626 residues: (R)-linalool synthase 2, chloroplastic (626 aa).

The N-terminal 21 residues, 1–21 (MAFVSIAPLASRCCVHKSFVS), are a transit peptide targeting the chloroplast. Mg(2+) is bound by residues aspartate 377, aspartate 381, and glutamate 529. The DDXXD motif signature appears at 377-381 (DDIYD).

It belongs to the terpene synthase family. Tpsd subfamily. It depends on Mg(2+) as a cofactor. Requires Mn(2+) as cofactor.

The protein resides in the plastid. Its subcellular location is the chloroplast. It catalyses the reaction (2E)-geranyl diphosphate + H2O = (R)-linalool + diphosphate. It participates in terpene metabolism; oleoresin biosynthesis. In terms of biological role, terpene synthase (mono-TPS) involved in the biosynthesis of monoterpene natural products included in conifer oleoresin secretions and volatile emissions; these compounds contribute to biotic and abiotic stress defense against herbivores and pathogens. Catalyzes the conversion of (2E)-geranyl diphosphate (GPP) to (R)-linalool. The polypeptide is (R)-linalool synthase 2, chloroplastic (Picea sitchensis (Sitka spruce)).